The chain runs to 155 residues: Cytochrome c oxidase subunit 4, mitochondrial (155 aa).

The transit peptide at 1–25 (MLSLRQSIRFFKPATRTLCSSRYLL) directs the protein to the mitochondrion. The residue at position 55 (threonine 55) is a Phosphothreonine. Zn(2+) contacts are provided by cysteine 111, histidine 119, cysteine 134, and cysteine 137.

This sequence belongs to the cytochrome c oxidase subunit 5B family. In terms of assembly, component of the cytochrome c oxidase (complex IV, CIV), a multisubunit enzyme composed of 12 subunits. The complex is composed of a catalytic core of 3 subunits COX1, COX2 and COX3, encoded in the mitochondrial DNA, and 9 supernumerary subunits COX4, COX5A (or COX5B), COX6, COX7, COX8, COX9, COX12, COX13 and COX26, which are encoded in the nuclear genome. The complex exists as a monomer or a dimer and forms supercomplexes (SCs) in the inner mitochondrial membrane with a dimer of ubiquinol-cytochrome c oxidoreductase (cytochrome b-c1 complex, complex III, CIII), resulting in 2 different assemblies (supercomplexes III(2)IV and III(2)IV(2)).

Its subcellular location is the mitochondrion inner membrane. The protein operates within energy metabolism; oxidative phosphorylation. In terms of biological role, component of the cytochrome c oxidase, the last enzyme in the mitochondrial electron transport chain which drives oxidative phosphorylation. The respiratory chain contains 3 multisubunit complexes succinate dehydrogenase (complex II, CII), ubiquinol-cytochrome c oxidoreductase (cytochrome b-c1 complex, complex III, CIII) and cytochrome c oxidase (complex IV, CIV), that cooperate to transfer electrons derived from NADH and succinate to molecular oxygen, creating an electrochemical gradient over the inner membrane that drives transmembrane transport and the ATP synthase. Cytochrome c oxidase is the component of the respiratory chain that catalyzes the reduction of oxygen to water. Electrons originating from reduced cytochrome c in the intermembrane space (IMS) are transferred via the dinuclear copper A center (CU(A)) of COX2 and heme A of COX1 to the active site in COX1, a binuclear center (BNC) formed by heme A3 and copper B (CU(B)). The BNC reduces molecular oxygen to 2 water molecules using 4 electrons from cytochrome c in the IMS and 4 protons from the mitochondrial matrix. This chain is Cytochrome c oxidase subunit 4, mitochondrial (COX4), found in Saccharomyces cerevisiae (strain ATCC 204508 / S288c) (Baker's yeast).